We begin with the raw amino-acid sequence, 363 residues long: Peptide chain release factor 1 (363 aa).

Gln-237 carries the N5-methylglutamine modification.

The protein belongs to the prokaryotic/mitochondrial release factor family. Methylated by PrmC. Methylation increases the termination efficiency of RF1.

Its subcellular location is the cytoplasm. Peptide chain release factor 1 directs the termination of translation in response to the peptide chain termination codons UAG and UAA. The polypeptide is Peptide chain release factor 1 (Hydrogenovibrio crunogenus (strain DSM 25203 / XCL-2) (Thiomicrospira crunogena)).